We begin with the raw amino-acid sequence, 559 residues long: SH3 domain-binding protein 2 (559 aa).

The region spanning 26 to 130 (GVAKAGYLHK…WMAFVRREIG (105 aa)) is the PH domain. Residues 164 to 449 (LSSYPMDNED…EDSDEDYEKV (286 aa)) form a disordered region. A compositionally biased stretch (acidic residues) spans 170-184 (DNEDYEHEDEDDSYL). Residues Tyr174 and Tyr183 each carry the phosphotyrosine; by SYK modification. The SH3-binding signature appears at 201–210 (PPAYPPPPVP). 2 stretches are compositionally biased toward pro residues: residues 202–213 (PAYPPPPVPVPR) and 233–242 (PLLPPPPPKR). Residues 252–265 (EDAKDALGLRRVEP) are compositionally biased toward basic and acidic residues. Position 277 is a phosphoserine (Ser277). Low complexity predominate over residues 313–327 (TSSVSSSTTMAVATS). A compositionally biased stretch (basic and acidic residues) spans 360 to 371 (KIAEEPSPREAA). Over residues 375 to 386 (PVPPVAPRPPVQ) the composition is skewed to pro residues. A phosphoserine mark is found at Ser414 and Ser425. The segment covering 437–446 (TGEEDSDEDY) has biased composition (acidic residues). At Tyr446 the chain carries Phosphotyrosine; by SYK. The SH2 domain occupies 455 to 553 (VFVNTTESCE…HQSLLLRHPY (99 aa)).

Post-translationally, phosphorylated. Phosphorylation at Tyr-446 may stimulate the activity of the LYN kinase.

In terms of biological role, binds differentially to the SH3 domains of certain proteins of signal transduction pathways. Binds to phosphatidylinositols; linking the hemopoietic tyrosine kinase fes to the cytoplasmic membrane in a phosphorylation dependent mechanism. In Mus musculus (Mouse), this protein is SH3 domain-binding protein 2 (Sh3bp2).